The sequence spans 475 residues: Sulfate adenylyltransferase subunit 1 (475 aa).

The tr-type G domain maps to 25–239; the sequence is KSLLRFLTCG…EVLETVEIQR (215 aa). The segment at 34 to 41 is G1; sequence GSVDDGKS. Residue 34–41 participates in GTP binding; sequence GSVDDGKS. The G2 stretch occupies residues 92 to 96; it reads GITID. The G3 stretch occupies residues 113 to 116; it reads DTPG. GTP-binding positions include 113-117 and 168-171; these read DTPGH and NKMD. Positions 168 to 171 are G4; the sequence is NKMD. The interval 206-208 is G5; sequence SAL.

This sequence belongs to the TRAFAC class translation factor GTPase superfamily. Classic translation factor GTPase family. CysN/NodQ subfamily. As to quaternary structure, heterodimer composed of CysD, the smaller subunit, and CysN.

It carries out the reaction sulfate + ATP + H(+) = adenosine 5'-phosphosulfate + diphosphate. It participates in sulfur metabolism; hydrogen sulfide biosynthesis; sulfite from sulfate: step 1/3. In terms of biological role, with CysD forms the ATP sulfurylase (ATPS) that catalyzes the adenylation of sulfate producing adenosine 5'-phosphosulfate (APS) and diphosphate, the first enzymatic step in sulfur assimilation pathway. APS synthesis involves the formation of a high-energy phosphoric-sulfuric acid anhydride bond driven by GTP hydrolysis by CysN coupled to ATP hydrolysis by CysD. The polypeptide is Sulfate adenylyltransferase subunit 1 (Escherichia coli (strain SE11)).